We begin with the raw amino-acid sequence, 423 residues long: uncharacterized protein (423 aa).

The N-terminal stretch at 1–16 (MKSRIFFITLLTIVAA) is a signal peptide. The Extracellular portion of the chain corresponds to 17-402 (QESADQLCSS…SSSAKEEQTS (386 aa)). Disulfide bonds link cysteine 24/cysteine 217, cysteine 33/cysteine 43, cysteine 36/cysteine 68, cysteine 46/cysteine 57, cysteine 219/cysteine 238, cysteine 230/cysteine 241, cysteine 243/cysteine 252, cysteine 254/cysteine 288, cysteine 271/cysteine 286, cysteine 280/cysteine 291, cysteine 293/cysteine 303, cysteine 305/cysteine 327, cysteine 310/cysteine 325, cysteine 319/cysteine 330, cysteine 332/cysteine 341, and cysteine 343/cysteine 350. Asparagine 65 carries N-linked (GlcNAc...) asparagine glycosylation. The interval 215 to 350 (CGCECEKHPE…CSCSTASNNC (136 aa)) is cysteine-rich tandem repeats. I-EGF domains follow at residues 219 to 253 (CEKH…DKCE), 254 to 304 (CPLA…KFCQ), and 305 to 342 (CDND…DDCS). N-linked (GlcNAc...) asparagine glycosylation is present at asparagine 274. An N-linked (GlcNAc...) asparagine glycan is attached at asparagine 307. The interval 354–406 (GTPAPEEKDKPESVPEEPEATEKPDDMPSDSDLEKELDESSSAKEEQTSSSGV) is disordered. The segment covering 380–392 (MPSDSDLEKELDE) has biased composition (acidic residues). The helical transmembrane segment at 403–421 (SSGVVSRVCVLLTFFLLVL) threads the bilayer. At 422-423 (NF) the chain is on the cytoplasmic side.

Belongs to the integrin beta chain family.

The protein localises to the membrane. This is an uncharacterized protein from Caenorhabditis elegans.